A 195-amino-acid polypeptide reads, in one-letter code: Large ribosomal subunit protein uL5 (195 aa).

It belongs to the universal ribosomal protein uL5 family. In terms of assembly, part of the 50S ribosomal subunit; part of the 5S rRNA/L5/L18/L25 subcomplex. Contacts the 5S rRNA and the P site tRNA. Forms a bridge to the 30S subunit in the 70S ribosome.

This is one of the proteins that bind and probably mediate the attachment of the 5S RNA into the large ribosomal subunit, where it forms part of the central protuberance. In the 70S ribosome it contacts protein S13 of the 30S subunit (bridge B1b), connecting the 2 subunits; this bridge is implicated in subunit movement. Contacts the P site tRNA; the 5S rRNA and some of its associated proteins might help stabilize positioning of ribosome-bound tRNAs. The protein is Large ribosomal subunit protein uL5 of Leifsonia xyli subsp. xyli (strain CTCB07).